Consider the following 535-residue polypeptide: MEVNVKGNYVQVYVMLPLDAVSVNNRFEKGDELRAQLRKLVEAGVDGVMVDVWWGLVEGKGPKAYDWSAYKQLFELVQKAGLKLQAIMSFHQCGGNVGDAVNIPIPQWVRDVGTRDPDIFYTDGHGTRNIEYLTLGVDNQPLFHGRSAVQMYADYMTSFRENMKEFLDAGVIVDIEVGLGPAGEMRYPSYPQSHGWSFPGIGEFICYDKYLQADFKAAAAAVGHPEWEFPNDAGQYNDTPERTQFFRDNGTYLTEKGRFFLAWYSNNLIKHGDRILDEANKVFLGYKVQLAIKISGIHWWYKVPSHAAELTAGYYNLHDRDGYRTIARMLKRHRASINFTCAEMRDSEQSSQAMSAPEELVQQVLSAGWREGLNVACENALPRYDPTAYNTILRNARPHGINQSGPPEHKLFGFTYLRLSNQLVEGQNYVNFKTFVDRMHANLPRDPYVDPMAPLPRSGPEISIEMILQAAKPKLQPFPFQEHTDLPVGPTGGMGGQAEGPTCGMGGQVKGPTGGMGGQAEDPTSGMGGELPATM.

The propeptide at 1 to 2 (ME) is removed in mature form. Valine 3 is modified (N-acetylvaline). Substrate is bound by residues aspartate 51, histidine 91, and aspartate 99. Glutamate 184 functions as the Proton donor in the catalytic mechanism. Substrate-binding residues include lysine 293, histidine 298, and threonine 340. Glutamate 378 acts as the Proton acceptor in catalysis. Substrate-binding positions include 379–380 (NA) and arginine 418. Tandem repeats lie at residues 489–499 (GPTGGMGGQAE), 500–510 (GPTCGMGGQVK), and 511–521 (GPTGGMGGQAE). The tract at residues 489-532 (GPTGGMGGQAEGPTCGMGGQVKGPTGGMGGQAEDPTSGMGGELP) is 4 X 11 AA tandem repeats. A propeptide spans 490 to 535 (PTGGMGGQAEGPTCGMGGQVKGPTGGMGGQAEDPTSGMGGELPATM) (removed in mature form). Residues 513 to 535 (TGGMGGQAEDPTSGMGGELPATM) are disordered. Residues 522–532 (DPTSGMGGELP) form a 4; approximate repeat.

The protein belongs to the glycosyl hydrolase 14 family. Monomer. As to expression, endosperm.

The enzyme catalyses Hydrolysis of (1-&gt;4)-alpha-D-glucosidic linkages in polysaccharides so as to remove successive maltose units from the non-reducing ends of the chains.. Catalyzes the liberation of maltose from 1,4-alpha-D glucans. In Hordeum vulgare subsp. spontaneum (Wild barley), this protein is Beta-amylase.